We begin with the raw amino-acid sequence, 1218 residues long: DNA-directed RNA polymerase subunit beta' (1218 aa).

Residues Cys60, Cys62, Cys75, and Cys78 each contribute to the Zn(2+) site. Mg(2+) is bound by residues Asp455, Asp457, and Asp459. Positions 824, 897, 904, and 907 each coordinate Zn(2+). The segment at 1195–1218 is disordered; it reads ENEAQSDKSQDEQEIGEITVDMGE.

It belongs to the RNA polymerase beta' chain family. In terms of assembly, the RNAP catalytic core consists of 2 alpha, 1 beta, 1 beta' and 1 omega subunit. When a sigma factor is associated with the core the holoenzyme is formed, which can initiate transcription. Mg(2+) is required as a cofactor. Requires Zn(2+) as cofactor.

It carries out the reaction RNA(n) + a ribonucleoside 5'-triphosphate = RNA(n+1) + diphosphate. Functionally, DNA-dependent RNA polymerase catalyzes the transcription of DNA into RNA using the four ribonucleoside triphosphates as substrates. The chain is DNA-directed RNA polymerase subunit beta' from Natranaerobius thermophilus (strain ATCC BAA-1301 / DSM 18059 / JW/NM-WN-LF).